Here is a 2559-residue protein sequence, read N- to C-terminus: Nonribosomal peptide synthetase asqK (2559 aa).

Residues 90-474 (YRPSHTAIHA…SRKDSQVKIR (385 aa)) form an adenylation 1 region. The region spanning 593–669 (TNIEQLVHEL…SLVHYPAGLE (77 aa)) is the Carrier 1 domain. The residue at position 627 (serine 627) is an O-(pantetheine 4'-phosphoryl)serine. The segment at 695–989 (TVEQSFSQAR…GNVQCIRTKV (295 aa)) is condensation 1. An adenylation 2 region spans residues 1155–1562 (FDEQVRAQTD…GRMDQQVKVR (408 aa)). The segment at 1681–1776 (LEIGTGSGMI…NTIKDLVRQG (96 aa)) is methyltransferase. Residues 2090–2164 (AFTSEIERAV…GLAQHLQGLG (75 aa)) form the Carrier 2 domain. Residue serine 2124 is modified to O-(pantetheine 4'-phosphoryl)serine. The segment at 2261-2409 (FDGVSLSAIL…VNRCLLRVKV (149 aa)) is condensation 2.

It belongs to the NRP synthetase family.

The catalysed reaction is O-methyl-L-tyrosine + anthranilate + S-adenosyl-L-methionine + 2 ATP = (-)-4'-methoxycyclopeptine + 2 AMP + S-adenosyl-L-homocysteine + 2 diphosphate + 2 H(+). It carries out the reaction anthranilate + L-phenylalanine + S-adenosyl-L-methionine + 2 ATP = cyclopeptine + 2 AMP + S-adenosyl-L-homocysteine + 2 diphosphate + 2 H(+). Its pathway is secondary metabolite biosynthesis. It functions in the pathway alkaloid biosynthesis. The protein operates within mycotoxin biosynthesis. Functionally, nonribosomal peptide synthetase; part of the gene cluster that mediates the biosynthesis of the aspoquinolone mycotoxins. The first stage is catalyzed by the nonribosomal peptide synthetase asqK that condenses anthranilic acid and O-methyl-L-tyrosine to produce 4'-methoxycyclopeptin. AsqK is also able to use anthranilic acid and L-phenylalanine as substrates to produce cyclopeptin, but at a tenfold lower rate. Within the pathway, 4'-methoxycyclopeptin is then converted to 4'-methoxydehydrocyclopeptin by the ketoglutarate-dependent dioxygenase asqJ. AsqJ also converts its first product 4'-methoxydehydrocyclopeptin to 4'-methoxycyclopenin. The following conversion of 4'-methoxycyclopenin into 4'-methoxyviridicatin is catalyzed by the cyclopenase asqI. 4'-methoxyviridicatin is the precursor of quinolone natural products, and is further converted to quinolinone B. The prenyltransferase asqH1 then catalyzes the canonical Friedel-Crafts alkylation of quinolinone B with dimethylallyl cation to yield dimethylallyl quinolone, which is subjected to FAD-dependent dehydrogenation by the FAD-linked oxidoreductase asqF to yield conjugated aryl diene. The delta(3') double bond then serves as the site of the second alkylation with DMAPP catalyzed by the prenyltransferase asqH2 to yield a carbenium ion intermediate, which can be attacked by H(2)O to yield a styrenyl quinolone containing a C3'-hydroxyprenyl chain. The FAD-dependent monooxygenase asqG performs epoxidation of the terminal C7'-C8' olefin. Finally, after dehydratation of the epoxide at C3 by asqC, the quinolone epoxide rearrangement protein asqO catalyzes an enzymatic 3-exo-tet cyclization to yield the cyclopropyl-THF ring system in aspoquinolone. In Emericella nidulans (strain FGSC A4 / ATCC 38163 / CBS 112.46 / NRRL 194 / M139) (Aspergillus nidulans), this protein is Nonribosomal peptide synthetase asqK.